The chain runs to 393 residues: Lipid-A-disaccharide synthase (393 aa).

This sequence belongs to the LpxB family.

It catalyses the reaction a lipid X + a UDP-2-N,3-O-bis[(3R)-3-hydroxyacyl]-alpha-D-glucosamine = a lipid A disaccharide + UDP + H(+). The protein operates within bacterial outer membrane biogenesis; LPS lipid A biosynthesis. In terms of biological role, condensation of UDP-2,3-diacylglucosamine and 2,3-diacylglucosamine-1-phosphate to form lipid A disaccharide, a precursor of lipid A, a phosphorylated glycolipid that anchors the lipopolysaccharide to the outer membrane of the cell. In Actinobacillus pleuropneumoniae serotype 7 (strain AP76), this protein is Lipid-A-disaccharide synthase.